Here is a 447-residue protein sequence, read N- to C-terminus: MSMTPREIVHELNRHIIGQDDAKRAVAIALRNRWRRMQLPAELRQEVTPKNILMIGPTGVGKTEIARRLAKLANAPFLKVEATKFTEVGYVGRDVESIIRDLADAALKMLREQEVHKMRHRAEDAAEERILDALLPPARPVGFSEEPVQSGDSNTRQLFRKRLREGQLDDKEIDIEVAESPAGVEIMAPPGMEEMTNQLQNLFANMGKGKKKSRKLKIKEAFKLIRDEEAARLVNEEDLKARALEAVEQNGIVFIDEIDKVAKRGNTSGADVSREGVQRDLLPLIEGSTVNTKLGMVKTDHILFIASGAFHLSKPSDLVPELQGRLPIRVELKALSPQDFERILTEPHAALTEQYRELLKTEGLHIEFLEDGIKRIAEIAWQVNEKTENIGARRLHTLLERLLEEVSFSAADLAGKQQGEPIRIDAAYVNEHLGELAQDEDLSRYIL.

ATP-binding positions include Ile-17, 59 to 64 (GVGKTE), Asp-256, Glu-321, and Arg-393.

The protein belongs to the ClpX chaperone family. HslU subfamily. As to quaternary structure, a double ring-shaped homohexamer of HslV is capped on each side by a ring-shaped HslU homohexamer. The assembly of the HslU/HslV complex is dependent on binding of ATP.

It localises to the cytoplasm. Its function is as follows. ATPase subunit of a proteasome-like degradation complex; this subunit has chaperone activity. The binding of ATP and its subsequent hydrolysis by HslU are essential for unfolding of protein substrates subsequently hydrolyzed by HslV. HslU recognizes the N-terminal part of its protein substrates and unfolds these before they are guided to HslV for hydrolysis. The polypeptide is ATP-dependent protease ATPase subunit HslU (Stutzerimonas stutzeri (strain A1501) (Pseudomonas stutzeri)).